The primary structure comprises 212 residues: Ribosomal RNA small subunit methyltransferase G (212 aa).

Residues glycine 72, leucine 77, valine 123–glutamate 124, and arginine 138 contribute to the S-adenosyl-L-methionine site.

Belongs to the methyltransferase superfamily. RNA methyltransferase RsmG family.

The protein localises to the cytoplasm. The enzyme catalyses guanosine(527) in 16S rRNA + S-adenosyl-L-methionine = N(7)-methylguanosine(527) in 16S rRNA + S-adenosyl-L-homocysteine. Functionally, specifically methylates the N7 position of guanine in position 527 of 16S rRNA. In Histophilus somni (strain 129Pt) (Haemophilus somnus), this protein is Ribosomal RNA small subunit methyltransferase G.